The primary structure comprises 194 residues: Potassium-transporting ATPase KdpC subunit (194 aa).

The chain crosses the membrane as a helical span at residues 12–34; it reads LFLLLLTGGVYPLLTTALGQWWF.

The protein belongs to the KdpC family. The system is composed of three essential subunits: KdpA, KdpB and KdpC.

It localises to the cell inner membrane. Part of the high-affinity ATP-driven potassium transport (or Kdp) system, which catalyzes the hydrolysis of ATP coupled with the electrogenic transport of potassium into the cytoplasm. This subunit acts as a catalytic chaperone that increases the ATP-binding affinity of the ATP-hydrolyzing subunit KdpB by the formation of a transient KdpB/KdpC/ATP ternary complex. In Salmonella heidelberg (strain SL476), this protein is Potassium-transporting ATPase KdpC subunit.